The following is a 557-amino-acid chain: TGF-beta receptor type-2 (557 aa).

The signal sequence occupies residues 1–23 (MPPRLRPLLLRVSLWVLVGSSSP). Over 24-155 (ALLHDRSKEN…KPEEKDEISK (132 aa)) the chain is Extracellular. Disulfide bonds link Cys41/Cys74, Cys44/Cys61, Cys51/Cys57, Cys67/Cys91, Cys111/Cys126, and Cys128/Cys133. N-linked (GlcNAc...) asparagine glycans are attached at residues Asn62 and Asn84. A helical membrane pass occupies residues 156–176 (VTIISLVPLLVISVAVIVIFY). Over 177–557 (AYRTHKKRKL…PEDGSVTTAK (381 aa)) the chain is Cytoplasmic. A Protein kinase domain is found at 234-537 (IELDIVVGKG…FSEFKHHDKL (304 aa)). ATP-binding positions include 240-248 (VGKGRFAEV) and Lys267. Residue Asp369 is the Proton acceptor of the active site.

The protein belongs to the protein kinase superfamily. TKL Ser/Thr protein kinase family. TGFB receptor subfamily. As to quaternary structure, heterohexamer; TGFB1, TGFB2 and TGFB3 homodimeric ligands assemble a functional receptor composed of two TGFBR1 and TGFBR2 heterodimers to form a ligand-receptor heterohexamer. Mg(2+) is required as a cofactor. Mn(2+) serves as cofactor. Phosphorylated on a Ser/Thr residue in the cytoplasmic domain. In terms of tissue distribution, detected at low levels in embryonic heart, brain and lung. Detected at high levels in hatchling heart and lung.

It localises to the cell membrane. The protein resides in the membrane raft. The catalysed reaction is L-threonyl-[receptor-protein] + ATP = O-phospho-L-threonyl-[receptor-protein] + ADP + H(+). It catalyses the reaction L-seryl-[receptor-protein] + ATP = O-phospho-L-seryl-[receptor-protein] + ADP + H(+). Its function is as follows. Transmembrane serine/threonine kinase forming with the TGF-beta type I serine/threonine kinase receptor, TGFBR1, the non-promiscuous receptor for the TGF-beta cytokines TGFB1, TGFB2 and TGFB3. Transduces the TGFB1, TGFB2 and TGFB3 signal from the cell surface to the cytoplasm and is thus regulating a plethora of physiological and pathological processes including cell cycle arrest in epithelial and hematopoietic cells, control of mesenchymal cell proliferation and differentiation, wound healing, extracellular matrix production, immunosuppression and carcinogenesis. The formation of the receptor complex composed of 2 TGFBR1 and 2 TGFBR2 molecules symmetrically bound to the cytokine dimer results in the phosphorylation and the activation of TGFRB1 by the constitutively active TGFBR2. Activated TGFBR1 phosphorylates SMAD2 which dissociates from the receptor and interacts with SMAD4. The SMAD2-SMAD4 complex is subsequently translocated to the nucleus where it modulates the transcription of the TGF-beta-regulated genes. This constitutes the canonical SMAD-dependent TGF-beta signaling cascade. Also involved in non-canonical, SMAD-independent TGF-beta signaling pathways. The sequence is that of TGF-beta receptor type-2 (TGFBR2) from Gallus gallus (Chicken).